The primary structure comprises 367 residues: tRNA uridine(34) hydroxylase (367 aa).

Residues 159–253 (EDENSIVVDV…YAHEVSQKGL (95 aa)) enclose the Rhodanese domain. Cys213 (cysteine persulfide intermediate) is an active-site residue.

It belongs to the TrhO family.

The catalysed reaction is uridine(34) in tRNA + AH2 + O2 = 5-hydroxyuridine(34) in tRNA + A + H2O. Catalyzes oxygen-dependent 5-hydroxyuridine (ho5U) modification at position 34 in tRNAs. The polypeptide is tRNA uridine(34) hydroxylase (Leptospira interrogans serogroup Icterohaemorrhagiae serovar Lai (strain 56601)).